The primary structure comprises 858 residues: Bifunctional uridylyltransferase/uridylyl-removing enzyme (858 aa).

The interval 1 to 324 (MSASVAEPPP…PATSGVTRVL (324 aa)) is uridylyltransferase. The interval 325-681 (SPGRFVEKQG…ARPSPVGDAL (357 aa)) is uridylyl-removing. One can recognise an HD domain in the interval 443-565 (VDQHILMVLR…VGSERRLTAL (123 aa)). 2 ACT domains span residues 682–761 (QVLV…PEPS) and 790–858 (ILSV…AIAV).

It belongs to the GlnD family. It depends on Mg(2+) as a cofactor.

The catalysed reaction is [protein-PII]-L-tyrosine + UTP = [protein-PII]-uridylyl-L-tyrosine + diphosphate. The enzyme catalyses [protein-PII]-uridylyl-L-tyrosine + H2O = [protein-PII]-L-tyrosine + UMP + H(+). With respect to regulation, uridylyltransferase (UTase) activity is inhibited by glutamine, while glutamine activates uridylyl-removing (UR) activity. Functionally, modifies, by uridylylation and deuridylylation, the PII regulatory proteins (GlnB and homologs), in response to the nitrogen status of the cell that GlnD senses through the glutamine level. Under low glutamine levels, catalyzes the conversion of the PII proteins and UTP to PII-UMP and PPi, while under higher glutamine levels, GlnD hydrolyzes PII-UMP to PII and UMP (deuridylylation). Thus, controls uridylylation state and activity of the PII proteins, and plays an important role in the regulation of nitrogen assimilation and metabolism. The chain is Bifunctional uridylyltransferase/uridylyl-removing enzyme from Burkholderia pseudomallei (strain 1106a).